The sequence spans 474 residues: uncharacterized protein (474 aa).

Residues 3-23 form a helical membrane-spanning segment; sequence LTLWLVLGAVGVGAVGTGVGF. The interval 171–296 is disordered; sequence VSDGSSSKTR…KETKDRTKVD (126 aa). A compositionally biased stretch (basic residues) spans 180 to 210; sequence RTPKKTKTSKKKPIKKKSSKSKSSKGSKKQK. A compositionally biased stretch (polar residues) spans 231–253; that stretch reads TRSQSKQQKGQEQATDQTDSEGV. Residues 257–266 show a composition bias toward acidic residues; the sequence is EGADNTDTEL. Over residues 267-281 the composition is skewed to low complexity; it reads VETTAETTEQEATTK. The segment covering 282–296 has biased composition (basic and acidic residues); that stretch reads STKDTKETKDRTKVD.

The protein resides in the membrane. This is an uncharacterized protein from Mycoplasma pneumoniae (strain ATCC 29342 / M129 / Subtype 1) (Mycoplasmoides pneumoniae).